Here is a 1819-residue protein sequence, read N- to C-terminus: Gamma-tubulin complex component 6 (1819 aa).

Disordered stretches follow at residues 810–889 (SEAH…GARP), 929–951 (LPPS…PQEY), and 1000–1023 (RETL…QPTE). Repeat copies occupy residues 1027-1053 (GQVS…WNTH), 1054-1080 (GHVS…WNTH), 1081-1107 (GHVS…WNIH), 1108-1134 (GHVS…WNTH), 1135-1161 (GHVS…WNTH), 1162-1188 (GHVS…WNTH), 1189-1215 (GHVS…WNTH), 1216-1242 (GHVS…CNTH), and 1243-1269 (GHVS…WNTH). The 9 X 27 AA tandem repeats stretch occupies residues 1027–1269 (GQVSGGGLPT…VSTRPRWNTH (243 aa)). Residues 1271–1412 (PIPPPHMVLG…EAEASAAEAQ (142 aa)) are disordered. Positions 1297–1314 (PPGHTSQSALSLGAQSTV) are enriched in polar residues. Residues 1321–1335 (LPVEVGPSLSSPSSG) show a composition bias toward low complexity. The segment covering 1384–1398 (WPLNSQEDTAAQSSP) has biased composition (polar residues).

Belongs to the TUBGCP family. Component of the gamma-tubulin ring complex (gTuRC) consisting of TUBGCP2, TUBGCP3, TUBGCP4, TUBGCP5 and TUBGCP6 and gamma-tubulin TUBG1 or TUBG2. TUBGCP2, TUBGCP3, TUBGCP4, TUBGCP5 and TUBGCP6 assemble in a 5:5:2:1:1 stoichiometry; each is associated with a gamma-tubulin, thereby arranging 14 gamma-tubulins in a helical manner. Gamma-tubulin at the first position is blocked by TUBGCP3 at the last position, allowing 13 protafilaments to grow into a microtubule. The gTuRC (via TUBGCP3 and TUBGCP6) interacts with ACTB and MZT1; the interactions form a luminal bridge that stabilizes the initial structure during complex assembly. The gTuRC (via TUBGCP2) interacts with MZT2A/MZT2B and CDK5RAP2 (via CM1 motif); the interactions play a role in gTuRC activation.

Its subcellular location is the cytoplasm. The protein localises to the cytoskeleton. It is found in the microtubule organizing center. The protein resides in the centrosome. Component of the gamma-tubulin ring complex (gTuRC) which mediates microtubule nucleation. The gTuRC regulates the minus-end nucleation of alpha-beta tubulin heterodimers that grow into microtubule protafilaments, a critical step in centrosome duplication and spindle formation. The polypeptide is Gamma-tubulin complex component 6 (TUBGCP6) (Homo sapiens (Human)).